Here is a 75-residue protein sequence, read N- to C-terminus: uncharacterized protein (75 aa).

A compositionally biased stretch (polar residues) spans 19–38 (FHNTAPSKTNVNVPRANKSQ). Positions 19–42 (FHNTAPSKTNVNVPRANKSQSKGK) are disordered. The chain crosses the membrane as a helical span at residues 47–66 (LLVLVGTLALVTSVISVNYQ).

Its subcellular location is the membrane. This is an uncharacterized protein from Saccharomyces cerevisiae (strain ATCC 204508 / S288c) (Baker's yeast).